The following is a 237-amino-acid chain: N-alpha-acetyltransferase 40 (237 aa).

The N-myristoyl glycine moiety is linked to residue Gly2. An N-acetyltransferase domain is found at Ser63–Arg216. Substrate-binding positions include Tyr85, Asp127–Glu129, and Tyr138. Acetyl-CoA-binding positions include Val140–Leu142 and Arg148–Lys153. Thr174 contributes to the substrate binding site. Asn179 lines the acetyl-CoA pocket. Residues Ser197 and Tyr211 each contribute to the substrate site.

It belongs to the acetyltransferase family. NAA40 subfamily. Widely expressed; with the highest expression level in liver and the lowest expression in brain (at protein level).

It localises to the cytoplasm. The protein localises to the nucleus. It catalyses the reaction N-terminal L-seryl-[histone H4] + acetyl-CoA = N-terminal N(alpha)-acetyl-L-seryl-[histone H4] + CoA + H(+). The enzyme catalyses N-terminal L-seryl-[histone H2A] + acetyl-CoA = N-terminal N(alpha)-acetyl-L-seryl-[histone H2A] + CoA + H(+). N-alpha-acetyltransferase that specifically mediates the acetylation of the N-terminal residues of histones H4 and H2A. In contrast to other N-alpha-acetyltransferase, has a very specific selectivity for histones H4 and H2A N-terminus and specifically recognizes the 'Ser-Gly-Arg-Gly sequence'. Acts as a negative regulator of apoptosis. May play a role in hepatic lipid metabolism. This is N-alpha-acetyltransferase 40 from Homo sapiens (Human).